Here is a 396-residue protein sequence, read N- to C-terminus: NAD(P)H oxidoreductase RTN4IP1, mitochondrial (396 aa).

A mitochondrion-targeting transit peptide spans 1–40; the sequence is MGFLKTCVFRRNACTAVCFWRSQVVQKPSVRKISTTSPRS. The region spanning 52–393 is the Enoyl reductase (ER) domain; that stretch reads GSNEVLRFTQ…RGHARGKTVI (342 aa). NADPH contacts are provided by serine 214, glycine 216, valine 217, serine 237, tyrosine 255, asparagine 276, leucine 300, alanine 341, phenylalanine 343, histidine 386, alanine 387, and arginine 388.

This sequence belongs to the zinc-containing alcohol dehydrogenase family. Quinone oxidoreductase subfamily. Interacts with RTN4, UQCRC1 and UQCRC2.

It is found in the mitochondrion matrix. Its subcellular location is the mitochondrion outer membrane. It catalyses the reaction a 3-demethylubiquinone + NADH + 2 H(+) = a 3-demethylubiquinol + NAD(+). The catalysed reaction is a 3-demethylubiquinone + NADPH + 2 H(+) = a 3-demethylubiquinol + NADP(+). The enzyme catalyses 3-demethylubiquinone-10 + NADH + 2 H(+) = 3-demethylubiquinol-10 + NAD(+). It carries out the reaction 3-demethylubiquinone-10 + NADPH + 2 H(+) = 3-demethylubiquinol-10 + NADP(+). It participates in cofactor biosynthesis; ubiquinone biosynthesis. Functionally, NAD(P)H oxidoreductase involved in the ubiquinone biosynthetic pathway. Required for the O-methyltransferase activity of COQ3. Able to catalyze the oxidoreduction of 3-demethylubiquinone into 3-demethylubiquinol in vitro. However, it is unclear if 3-demethylubiquinone constitutes a substrate in vivo. May also play a role in the regulation of retinal ganglion cell (RGC) neurite outgrowth, and hence in the development of the inner retina and optic nerve. Appears to be a potent inhibitor of regeneration following spinal cord injury. This is NAD(P)H oxidoreductase RTN4IP1, mitochondrial (RTN4IP1) from Bos taurus (Bovine).